We begin with the raw amino-acid sequence, 92 residues long: Large ribosomal subunit protein eL43z (92 aa).

The segment at 39 to 60 adopts a C4-type zinc-finger fold; it reads CEFCGKYSVKRKVVGIWGCKDC.

The protein belongs to the eukaryotic ribosomal protein eL43 family.

The protein is Large ribosomal subunit protein eL43z (RPL37AB) of Arabidopsis thaliana (Mouse-ear cress).